The chain runs to 457 residues: Multidrug resistance protein MdtK (457 aa).

The next 12 helical transmembrane spans lie at 11–31 (LLAL…MGFV), 53–73 (IWLP…PVIA), 93–113 (WLAG…GYII), 127–147 (AVGY…FQVA), 160–180 (GMVM…IFIY), 188–208 (LGGI…FIAM), 243–263 (LPIA…ALLV), 276–296 (IALN…AAVT), 314–334 (AART…IFTV), 350–370 (VVAL…SDSI), 387–407 (IFFI…YILA), and 418–438 (PAGF…LMML).

Belongs to the multi antimicrobial extrusion (MATE) (TC 2.A.66.1) family. MdtK subfamily.

It is found in the cell inner membrane. In terms of biological role, multidrug efflux pump that functions probably as a Na(+)/drug antiporter. The chain is Multidrug resistance protein MdtK from Salmonella newport (strain SL254).